The primary structure comprises 343 residues: D-beta-hydroxybutyrate dehydrogenase, mitochondrial (343 aa).

The transit peptide at Met1–Tyr46 directs the protein to the mitochondrion. Ile60–Ala84 lines the NAD(+) pocket. Residues Lys73 and Lys97 each carry the N6-acetyllysine modification. N6-acetyllysine; alternate is present on Lys103. N6-succinyllysine; alternate is present on Lys103. An N6-acetyllysine mark is found at Lys132 and Lys177. Residue Met196 participates in substrate binding. Residue Cys209 is the Proton acceptor of the active site. Lys212 is modified (N6-acetyllysine). An O-linked (GlcNAc) serine glycan is attached at Ser219. Position 246 is a phosphoserine (Ser246). An N6-acetyllysine modification is found at Lys258. Lys259 carries the post-translational modification N6-acetyllysine; alternate. An N6-succinyllysine; alternate modification is found at Lys259. Lys280 carries the post-translational modification N6-acetyllysine.

Belongs to the short-chain dehydrogenases/reductases (SDR) family. In terms of assembly, homotetramer. Post-translationally, acetylation of Lys-132 is observed in liver mitochondria from fasted mice but not from fed mice.

The protein resides in the mitochondrion inner membrane. It localises to the mitochondrion matrix. The catalysed reaction is (R)-3-hydroxybutanoate + NAD(+) = acetoacetate + NADH + H(+). Requires phosphatidylcholine as an allosteric activator for enzymatic activity. The chain is D-beta-hydroxybutyrate dehydrogenase, mitochondrial from Mus musculus (Mouse).